Reading from the N-terminus, the 266-residue chain is MPIPTPYEDLLRLVLDRGTAKSDRTGTGTRSLFGQQLRYDLSAGFPLITTKKVHLKSVVYELLWFLRGDSNVDWLHRHGVTIWDEWASDTGDLGPIYGVQWRSWPTPSGEHIDQISAALDLLRTDPDSRRIIVSAWNVGEIPRMALPPCHAFFQFYVADGRLSCQLYQRSADLFLGVPFNIASYALLTHMMAAQAGLSVGEFVWTGGDCHIYDNHVEQVRLQLSREPRPYPELVLAHRDSIFDYTYDDVVVHNYDPHPAIKAPVAV.

R24 contacts dUMP. H54 contributes to the (6R)-5,10-methylene-5,6,7,8-tetrahydrofolate binding site. Position 129–130 (129–130 (RR)) interacts with dUMP. Residue C149 is the Nucleophile of the active site. Residues 169–172 (RSAD), N180, and 210–212 (HIY) each bind dUMP. D172 contacts (6R)-5,10-methylene-5,6,7,8-tetrahydrofolate. Residue A265 participates in (6R)-5,10-methylene-5,6,7,8-tetrahydrofolate binding.

The protein belongs to the thymidylate synthase family. Bacterial-type ThyA subfamily. As to quaternary structure, homodimer.

The protein resides in the cytoplasm. The enzyme catalyses dUMP + (6R)-5,10-methylene-5,6,7,8-tetrahydrofolate = 7,8-dihydrofolate + dTMP. The protein operates within pyrimidine metabolism; dTTP biosynthesis. In terms of biological role, catalyzes the reductive methylation of 2'-deoxyuridine-5'-monophosphate (dUMP) to 2'-deoxythymidine-5'-monophosphate (dTMP) while utilizing 5,10-methylenetetrahydrofolate (mTHF) as the methyl donor and reductant in the reaction, yielding dihydrofolate (DHF) as a by-product. This enzymatic reaction provides an intracellular de novo source of dTMP, an essential precursor for DNA biosynthesis. The protein is Thymidylate synthase of Mycobacterium avium (strain 104).